The following is a 551-amino-acid chain: UvrABC system protein C (551 aa).

The GIY-YIG domain occupies 12–87 (EKPGVYIFKN…IFKHKPKYNI (76 aa)). The region spanning 193–228 (EFVKDYIEQKMNYHSKMLDFENAAKYRDLLLSFEKL) is the UVR domain.

It belongs to the UvrC family. Interacts with UvrB in an incision complex.

Its subcellular location is the cytoplasm. Its function is as follows. The UvrABC repair system catalyzes the recognition and processing of DNA lesions. UvrC both incises the 5' and 3' sides of the lesion. The N-terminal half is responsible for the 3' incision and the C-terminal half is responsible for the 5' incision. This chain is UvrABC system protein C, found in Thermosipho africanus (strain TCF52B).